The chain runs to 333 residues: 4-hydroxyproline epimerase (333 aa).

The active-site Proton acceptor is C90. Substrate contacts are provided by residues 91-92 (GH) and D249. The Proton donor role is filled by C253. Position 254 to 255 (254 to 255 (GT)) interacts with substrate.

The protein belongs to the proline racemase family. As to quaternary structure, homodimer.

The enzyme catalyses trans-4-hydroxy-L-proline = cis-4-hydroxy-D-proline. In terms of biological role, allows intracellular utilization of 4-hydroxyproline, one of the major constituents of host collagen, by converting 4-hydroxy-L-proline to 4-hydroxy-D-proline, which can be further metabolized by intracellular 4-hydroxy-D-proline oxidases. Strong B-cell mitogen. Plays an important role in the regulation of intra- and extracellular amino acid pools, allowing the bacterium to profit from host precursors and enzymatic pathways. The sequence is that of 4-hydroxyproline epimerase from Brucella suis (strain ATCC 23445 / NCTC 10510).